A 460-amino-acid chain; its full sequence is Cysteine--tRNA ligase (460 aa).

Zn(2+) is bound at residue Cys-29. The 'HIGH' region signature appears at 31 to 41 (MTVYDYMHIGH). Zn(2+) is bound by residues Cys-210, His-235, and Glu-239. Positions 267–271 (KMSKS) match the 'KMSKS' region motif. Lys-270 contributes to the ATP binding site.

The protein belongs to the class-I aminoacyl-tRNA synthetase family. As to quaternary structure, monomer. Zn(2+) serves as cofactor.

Its subcellular location is the cytoplasm. It catalyses the reaction tRNA(Cys) + L-cysteine + ATP = L-cysteinyl-tRNA(Cys) + AMP + diphosphate. This Coxiella burnetii (strain RSA 493 / Nine Mile phase I) protein is Cysteine--tRNA ligase.